Here is a 705-residue protein sequence, read N- to C-terminus: Lethal(3)malignant brain tumor-like protein 2 (705 aa).

The interval 1-84 (MEKPRSIEET…GTPRSLDGSG (84 aa)) is disordered. S13 carries the phosphoserine modification. Positions 15 to 25 (PMEEEEDDDLE) are enriched in acidic residues. Residues 38–49 (SSVGSESSSYLE) show a composition bias toward low complexity. Residues 50–60 (ESSEAENEDRE) are compositionally biased toward acidic residues. Phosphoserine is present on S67. The residue at position 76 (T76) is a Phosphothreonine. An FCS-type zinc finger spans residues 81–116 (DGSGSEPAVCEMCGIVGTREAFFSKTKRFCSVSCSR). The Zn(2+) site is built by C90, C93, C110, and C114. 4 MBT repeats span residues 179–283 (FDWG…LVPP), 291–391 (TDWK…IKMS), 397–500 (MAHH…LTPP), and 508–604 (FNWE…LQPP). S338 is subject to Phosphoserine. K405 participates in a covalent cross-link: Glycyl lysine isopeptide (Lys-Gly) (interchain with G-Cter in SUMO2). A disordered region spans residues 608–665 (EPATPLKAKEATKKKKKQFGKKRKRIPPTKTRPLRQGSKKPLLEDDPQGARKISSEPV). Over residues 619-634 (TKKKKKQFGKKRKRIP) the composition is skewed to basic residues. Glycyl lysine isopeptide (Lys-Gly) (interchain with G-Cter in SUMO2) cross-links involve residues K647, K659, and K675. Residues 680 to 705 (DVASPDKASSPELPVSVENIKQETDD) form a disordered region. A phosphoserine mark is found at S683, S688, and S689. Residue K700 forms a Glycyl lysine isopeptide (Lys-Gly) (interchain with G-Cter in SUMO1); alternate linkage. K700 participates in a covalent cross-link: Glycyl lysine isopeptide (Lys-Gly) (interchain with G-Cter in SUMO2); alternate.

In terms of assembly, part of the E2F6.com-1 complex in G0 phase composed of E2F6, MGA, MAX, TFDP1, CBX3, BAT8, EUHMTASE1, RING1, RNF2, MBLR, BAT8 and YAF2.

Its subcellular location is the nucleus. Putative Polycomb group (PcG) protein. PcG proteins maintain the transcriptionally repressive state of genes, probably via a modification of chromatin, rendering it heritably changed in its expressibility. Its association with a chromatin-remodeling complex suggests that it may contribute to prevent expression of genes that trigger the cell into mitosis. Binds to monomethylated and dimethylated 'Lys-20' on histone H4. Binds histone H3 peptides that are monomethylated or dimethylated on 'Lys-4', 'Lys-9' or 'Lys-27'. The polypeptide is Lethal(3)malignant brain tumor-like protein 2 (L3MBTL2) (Homo sapiens (Human)).